We begin with the raw amino-acid sequence, 130 residues long: Small ribosomal subunit protein uS9 (130 aa).

This sequence belongs to the universal ribosomal protein uS9 family.

The protein is Small ribosomal subunit protein uS9 of Shewanella halifaxensis (strain HAW-EB4).